A 267-amino-acid polypeptide reads, in one-letter code: Acetylglutamate kinase (267 aa).

Residues 53–54, arginine 75, and asparagine 167 contribute to the substrate site; that span reads GG.

This sequence belongs to the acetylglutamate kinase family. ArgB subfamily.

The protein localises to the cytoplasm. It carries out the reaction N-acetyl-L-glutamate + ATP = N-acetyl-L-glutamyl 5-phosphate + ADP. It participates in amino-acid biosynthesis; L-arginine biosynthesis; N(2)-acetyl-L-ornithine from L-glutamate: step 2/4. Functionally, catalyzes the ATP-dependent phosphorylation of N-acetyl-L-glutamate. In Shewanella pealeana (strain ATCC 700345 / ANG-SQ1), this protein is Acetylglutamate kinase.